Consider the following 139-residue polypeptide: Galactoside-binding soluble lectin 13 (139 aa).

The 133-residue stretch at Val6 to Cys138 folds into the Galectin domain.

Homodimer; disulfide-linked. Detected in adult and fetal spleen, fetal kidney, adult urinary bladder and placenta. Placental expression originates predominantly from the syncytiotrophoblast.

The protein resides in the cytoplasm. It localises to the nucleus matrix. Its function is as follows. Binds beta-galactoside and lactose. Strong inducer of T-cell apoptosis. Has hemagglutinating activity towards chicken erythrocytes. The sequence is that of Galactoside-binding soluble lectin 13 (LGALS13) from Homo sapiens (Human).